A 180-amino-acid chain; its full sequence is Centromere protein M (180 aa).

Component of the CENPA-NAC complex, at least composed of CENPA, CENPC, CENPH, CENPM, CENPN, CENPT and CENPU. The CENPA-NAC complex interacts with the CENPA-CAD complex, composed of CENPI, CENPK, CENPL, CENPO, CENPP, CENPQ, CENPR and CENPS.

The protein resides in the nucleus. The protein localises to the cytoplasm. It localises to the chromosome. Its subcellular location is the centromere. It is found in the kinetochore. Its function is as follows. Component of the CENPA-NAC (nucleosome-associated) complex, a complex that plays a central role in assembly of kinetochore proteins, mitotic progression and chromosome segregation. The CENPA-NAC complex recruits the CENPA-CAD (nucleosome distal) complex and may be involved in incorporation of newly synthesized CENPA into centromeres. In Bos taurus (Bovine), this protein is Centromere protein M (CENPM).